A 360-amino-acid chain; its full sequence is DNA replication and repair protein RecF (360 aa).

Gly30–Thr37 contacts ATP.

The protein belongs to the RecF family.

Its subcellular location is the cytoplasm. Functionally, the RecF protein is involved in DNA metabolism; it is required for DNA replication and normal SOS inducibility. RecF binds preferentially to single-stranded, linear DNA. It also seems to bind ATP. The protein is DNA replication and repair protein RecF of Shewanella baltica (strain OS185).